The sequence spans 105 residues: Mitomycin resistance protein McrB (105 aa).

Involved in mitomycin resistance. May operate with McrA or may be a type of transcriptional activator protein. The polypeptide is Mitomycin resistance protein McrB (mcrB) (Streptomyces lavendulae).